Consider the following 94-residue polypeptide: Putative regulatory protein THA_332 (94 aa).

It belongs to the RemA family.

This Thermosipho africanus (strain TCF52B) protein is Putative regulatory protein THA_332.